The following is a 158-amino-acid chain: 2-C-methyl-D-erythritol 2,4-cyclodiphosphate synthase (158 aa).

Residues Asp-9 and His-11 each coordinate a divalent metal cation. Residues 9–11 (DVH) and 35–36 (HS) each bind 4-CDP-2-C-methyl-D-erythritol 2-phosphate. Residue His-43 participates in a divalent metal cation binding. 4-CDP-2-C-methyl-D-erythritol 2-phosphate-binding positions include 57-59 (DIG) and Arg-143.

Belongs to the IspF family. As to quaternary structure, homotrimer. A divalent metal cation serves as cofactor.

The enzyme catalyses 4-CDP-2-C-methyl-D-erythritol 2-phosphate = 2-C-methyl-D-erythritol 2,4-cyclic diphosphate + CMP. Its pathway is isoprenoid biosynthesis; isopentenyl diphosphate biosynthesis via DXP pathway; isopentenyl diphosphate from 1-deoxy-D-xylulose 5-phosphate: step 4/6. Involved in the biosynthesis of isopentenyl diphosphate (IPP) and dimethylallyl diphosphate (DMAPP), two major building blocks of isoprenoid compounds. Catalyzes the conversion of 4-diphosphocytidyl-2-C-methyl-D-erythritol 2-phosphate (CDP-ME2P) to 2-C-methyl-D-erythritol 2,4-cyclodiphosphate (ME-CPP) with a corresponding release of cytidine 5-monophosphate (CMP). In Chromobacterium violaceum (strain ATCC 12472 / DSM 30191 / JCM 1249 / CCUG 213 / NBRC 12614 / NCIMB 9131 / NCTC 9757 / MK), this protein is 2-C-methyl-D-erythritol 2,4-cyclodiphosphate synthase.